A 260-amino-acid polypeptide reads, in one-letter code: Carbonic anhydrase 2 (260 aa).

Residue serine 2 is modified to N-acetylserine. Serine 2 bears the Phosphoserine mark. Residues 3–259 form the Alpha-carbonic anhydrase domain; sequence HHWGYGEHNG…LKNRQVRVFP (257 aa). The Proton donor/acceptor role is filled by histidine 64. Zn(2+) contacts are provided by histidine 94, histidine 96, and histidine 119. 2 positions are modified to phosphoserine: serine 165 and serine 172. 198-199 contributes to the substrate binding site; it reads TN.

The protein belongs to the alpha-carbonic anhydrase family. As to quaternary structure, interacts with SLC4A4 and SLC26A6. Interaction with SLC4A7 regulates SLC4A7 transporter activity. It depends on Zn(2+) as a cofactor.

The protein localises to the cytoplasm. It localises to the cell membrane. It catalyses the reaction hydrogencarbonate + H(+) = CO2 + H2O. The catalysed reaction is urea = cyanamide + H2O. Its activity is regulated as follows. Inhibited by acetazolamide. Catalyzes the reversible hydration of carbon dioxide. Can also hydrate cyanamide to urea. Involved in the regulation of fluid secretion into the anterior chamber of the eye. Essential for bone resorption and osteoclast differentiation. Contributes to intracellular pH regulation in the duodenal upper villous epithelium during proton-coupled peptide absorption. Stimulates the chloride-bicarbonate exchange activity of SLC26A6. The protein is Carbonic anhydrase 2 (CA2) of Ovis aries (Sheep).